The following is a 53-amino-acid chain: UPF0391 membrane protein YtjA (53 aa).

The next 2 helical transmembrane spans lie at 4-24 (WGIIFLVIALIAAALGFGGLA) and 30-48 (AAKIVFVVGIILFLVSLFM).

It belongs to the UPF0391 family.

The protein localises to the cell membrane. The protein is UPF0391 membrane protein YtjA of Escherichia coli O6:K15:H31 (strain 536 / UPEC).